Consider the following 146-residue polypeptide: Phospholipase A2 147 (146 aa).

The N-terminal stretch at 1-19 (MYPAHLLVLLAVCVSLLGA) is a signal peptide. Residues 20–27 (ASVPPQPL) constitute a propeptide that is removed on maturation. 7 disulfide bridges follow: Cys38–Cys98, Cys54–Cys145, Cys56–Cys72, Cys71–Cys126, Cys78–Cys119, Cys87–Cys112, and Cys105–Cys117. Positions 55, 57, and 59 each coordinate Ca(2+). Residue His75 is part of the active site. Ca(2+) is bound at residue Asp76. Residue Asp120 is part of the active site.

It belongs to the phospholipase A2 family. Group I subfamily. D49 sub-subfamily. Ca(2+) is required as a cofactor. In terms of tissue distribution, expressed by the venom gland.

The protein resides in the secreted. The catalysed reaction is a 1,2-diacyl-sn-glycero-3-phosphocholine + H2O = a 1-acyl-sn-glycero-3-phosphocholine + a fatty acid + H(+). Functionally, snake venom phospholipase A2 (PLA2) that inhibits collagen-induced platelet aggregation. PLA2 catalyzes the calcium-dependent hydrolysis of the 2-acyl groups in 3-sn-phosphoglycerides. This chain is Phospholipase A2 147, found in Drysdalia coronoides (White-lipped snake).